Reading from the N-terminus, the 350-residue chain is D-guloside 3-dehydrogenase (350 aa).

It belongs to the zinc-containing alcohol dehydrogenase family. Zn(2+) is required as a cofactor.

The enzyme catalyses a D-guloside + NAD(+) = a 3-dehydro-D-guloside + NADH + H(+). Catalyzes the NAD(+)-dependent oxidation of the hydroxyl group at C3 of D-gulosides leading to 3-dehydro-D-gulosides. Probably functions in a metabolic pathway that transforms D-gulosides to D-glucosides. Is also able to catalyze the reverse reactions, i.e. the NADH-dependent reduction of the oxo group at C3 of 3-dehydro-D-gulosides leading to D-gulosides. In vitro, can oxidize D-gulose and methyl beta-D-guloside, and reduce methyl alpha-3-dehydro-D-guloside and methyl beta-3-dehydro-D-guloside. However, the actual specific physiological substrates for this metabolic pathway are unknown. In Escherichia coli (strain K12), this protein is D-guloside 3-dehydrogenase (ycjQ).